We begin with the raw amino-acid sequence, 264 residues long: Thymidylate synthase (264 aa).

R21 contributes to the dUMP binding site. H51 is a binding site for (6R)-5,10-methylene-5,6,7,8-tetrahydrofolate. Residue 126–127 coordinates dUMP; it reads RR. Residue C146 is the Nucleophile of the active site. DUMP-binding positions include 166–169, N177, and 207–209; these read RSAD and HLY. Residue D169 participates in (6R)-5,10-methylene-5,6,7,8-tetrahydrofolate binding. Position 263 (A263) interacts with (6R)-5,10-methylene-5,6,7,8-tetrahydrofolate.

This sequence belongs to the thymidylate synthase family. Bacterial-type ThyA subfamily. As to quaternary structure, homodimer.

Its subcellular location is the cytoplasm. The catalysed reaction is dUMP + (6R)-5,10-methylene-5,6,7,8-tetrahydrofolate = 7,8-dihydrofolate + dTMP. The protein operates within pyrimidine metabolism; dTTP biosynthesis. Its function is as follows. Catalyzes the reductive methylation of 2'-deoxyuridine-5'-monophosphate (dUMP) to 2'-deoxythymidine-5'-monophosphate (dTMP) while utilizing 5,10-methylenetetrahydrofolate (mTHF) as the methyl donor and reductant in the reaction, yielding dihydrofolate (DHF) as a by-product. This enzymatic reaction provides an intracellular de novo source of dTMP, an essential precursor for DNA biosynthesis. The polypeptide is Thymidylate synthase (Azoarcus sp. (strain BH72)).